Consider the following 273-residue polypeptide: Nitrogenase iron protein (273 aa).

Residue 8–15 participates in ATP binding; sequence GKGGIGKS. [4Fe-4S] cluster is bound at residue cysteine 94. The residue at position 97 (arginine 97) is an ADP-ribosylarginine; by dinitrogenase reductase ADP-ribosyltransferase. Cysteine 130 provides a ligand contact to [4Fe-4S] cluster.

It belongs to the NifH/BchL/ChlL family. In terms of assembly, homodimer. Requires [4Fe-4S] cluster as cofactor. In terms of processing, the reversible ADP-ribosylation of Arg-97 inactivates the nitrogenase reductase and regulates nitrogenase activity.

The enzyme catalyses N2 + 8 reduced [2Fe-2S]-[ferredoxin] + 16 ATP + 16 H2O = H2 + 8 oxidized [2Fe-2S]-[ferredoxin] + 2 NH4(+) + 16 ADP + 16 phosphate + 6 H(+). In terms of biological role, the key enzymatic reactions in nitrogen fixation are catalyzed by the nitrogenase complex, which has 2 components: the iron protein and the molybdenum-iron protein. The sequence is that of Nitrogenase iron protein from Desulforapulum autotrophicum (strain ATCC 43914 / DSM 3382 / VKM B-1955 / HRM2) (Desulfobacterium autotrophicum).